We begin with the raw amino-acid sequence, 531 residues long: Light-independent protochlorophyllide reductase subunit B (531 aa).

Asp-36 provides a ligand contact to [4Fe-4S] cluster. Asp-287 acts as the Proton donor in catalysis. Residue 422–423 (GL) coordinates substrate.

This sequence belongs to the ChlB/BchB/BchZ family. Protochlorophyllide reductase is composed of three subunits; BchL, BchN and BchB. Forms a heterotetramer of two BchB and two BchN subunits. [4Fe-4S] cluster is required as a cofactor.

It carries out the reaction chlorophyllide a + oxidized 2[4Fe-4S]-[ferredoxin] + 2 ADP + 2 phosphate = protochlorophyllide a + reduced 2[4Fe-4S]-[ferredoxin] + 2 ATP + 2 H2O. It participates in porphyrin-containing compound metabolism; bacteriochlorophyll biosynthesis (light-independent). Functionally, component of the dark-operative protochlorophyllide reductase (DPOR) that uses Mg-ATP and reduced ferredoxin to reduce ring D of protochlorophyllide (Pchlide) to form chlorophyllide a (Chlide). This reaction is light-independent. The NB-protein (BchN-BchB) is the catalytic component of the complex. This is Light-independent protochlorophyllide reductase subunit B from Rhodopseudomonas palustris (strain BisA53).